Here is a 285-residue protein sequence, read N- to C-terminus: Pantothenate synthetase (285 aa).

Position 30 to 37 (M30 to H37) interacts with ATP. The active-site Proton donor is the H37. Q61 is a (R)-pantoate binding site. Q61 contacts beta-alanine. G149–D152 lines the ATP pocket. Q155 provides a ligand contact to (R)-pantoate. ATP is bound by residues V178 and L186–R189.

The protein belongs to the pantothenate synthetase family. Homodimer.

It localises to the cytoplasm. It carries out the reaction (R)-pantoate + beta-alanine + ATP = (R)-pantothenate + AMP + diphosphate + H(+). The protein operates within cofactor biosynthesis; (R)-pantothenate biosynthesis; (R)-pantothenate from (R)-pantoate and beta-alanine: step 1/1. Functionally, catalyzes the condensation of pantoate with beta-alanine in an ATP-dependent reaction via a pantoyl-adenylate intermediate. This Aeromonas hydrophila subsp. hydrophila (strain ATCC 7966 / DSM 30187 / BCRC 13018 / CCUG 14551 / JCM 1027 / KCTC 2358 / NCIMB 9240 / NCTC 8049) protein is Pantothenate synthetase.